The sequence spans 303 residues: uncharacterized protein (303 aa).

This is an uncharacterized protein from Archaeoglobus fulgidus (strain ATCC 49558 / DSM 4304 / JCM 9628 / NBRC 100126 / VC-16).